A 271-amino-acid polypeptide reads, in one-letter code: NH(3)-dependent NAD(+) synthetase (271 aa).

ATP is bound at residue 43–50 (GISGGQDS). A Mg(2+)-binding site is contributed by Asp-49. A deamido-NAD(+)-binding site is contributed by Arg-137. Thr-157 contacts ATP. A Mg(2+)-binding site is contributed by Glu-162. Residues Lys-170 and Asp-177 each coordinate deamido-NAD(+). ATP-binding residues include Lys-186 and Thr-208. 257–258 (HK) contributes to the deamido-NAD(+) binding site.

The protein belongs to the NAD synthetase family. In terms of assembly, homodimer.

It catalyses the reaction deamido-NAD(+) + NH4(+) + ATP = AMP + diphosphate + NAD(+) + H(+). It participates in cofactor biosynthesis; NAD(+) biosynthesis; NAD(+) from deamido-NAD(+) (ammonia route): step 1/1. Its function is as follows. Catalyzes the ATP-dependent amidation of deamido-NAD to form NAD. Uses ammonia as a nitrogen source. The chain is NH(3)-dependent NAD(+) synthetase from Exiguobacterium sibiricum (strain DSM 17290 / CCUG 55495 / CIP 109462 / JCM 13490 / 255-15).